The chain runs to 173 residues: MALRPARCYRTIERRSYTRKEYVRAVPQPKVVHYVMGNPSAEFPVQVQLVSKSDILIRHNALESSRIAGNKYILSECGRTGYLFNIRVYPHEILRENKMAAGAGADRISDGMRLSFGKAVGTAAKVKKGQEIITIGVNPEKFYAAKEALRRCSMKLPTACKIVVTKGKELIKD.

Belongs to the universal ribosomal protein uL16 family.

The polypeptide is Large ribosomal subunit protein uL16 (Methanococcus maripaludis (strain DSM 14266 / JCM 13030 / NBRC 101832 / S2 / LL)).